Reading from the N-terminus, the 206-residue chain is LexA repressor (206 aa).

The H-T-H motif DNA-binding region spans 28 to 48 (RAEIARELGFRSANAAEEHLK). Active-site for autocatalytic cleavage activity residues include Ser123 and Lys160.

The protein belongs to the peptidase S24 family. Homodimer.

It catalyses the reaction Hydrolysis of Ala-|-Gly bond in repressor LexA.. Functionally, represses a number of genes involved in the response to DNA damage (SOS response), including recA and lexA. In the presence of single-stranded DNA, RecA interacts with LexA causing an autocatalytic cleavage which disrupts the DNA-binding part of LexA, leading to derepression of the SOS regulon and eventually DNA repair. The protein is LexA repressor of Vibrio parahaemolyticus serotype O3:K6 (strain RIMD 2210633).